Reading from the N-terminus, the 201-residue chain is Large ribosomal subunit protein uL4 (201 aa).

A disordered region spans residues 45-66 (AQLTRSEVSGGGKKPWRQKGTG).

It belongs to the universal ribosomal protein uL4 family. Part of the 50S ribosomal subunit.

One of the primary rRNA binding proteins, this protein initially binds near the 5'-end of the 23S rRNA. It is important during the early stages of 50S assembly. It makes multiple contacts with different domains of the 23S rRNA in the assembled 50S subunit and ribosome. Functionally, forms part of the polypeptide exit tunnel. The sequence is that of Large ribosomal subunit protein uL4 from Aeromonas salmonicida (strain A449).